A 485-amino-acid polypeptide reads, in one-letter code: REST corepressor 1 (485 aa).

Disordered regions lie at residues 1 to 26 (MPAM…ASAS) and 49 to 110 (AAAS…VGPQ). Composition is skewed to low complexity over residues 49–64 (AAAS…AAAA) and 74–95 (AAAA…SGSS). Positions 78–257 (PNGNSSSNSW…RHARKQKRER (180 aa)) are interaction with HDAC1. In terms of domain architecture, ELM2 spans 103-189 (GGMRVGPQYQ…KSLADLPNFT (87 aa)). Lys122 is covalently cross-linked (Glycyl lysine isopeptide (Lys-Gly) (interchain with G-Cter in SUMO2)). Ser127 carries the post-translational modification Phosphoserine. In terms of domain architecture, SANT 1 spans 190–241 (PFPDEWTVEDKVLFEQAFSFHGKTFHRIQQMLPDKSIASLVKFYYSWKKTRT). Residues 244 to 273 (SVMDRHARKQKREREESEDELEEANGNNPI) adopt a coiled-coil conformation. The segment at 244 to 314 (SVMDRHARKQ…AKNRAKRKPP (71 aa)) is disordered. Residue Ser260 is modified to Phosphoserine. Residues 278-288 (DQNKESKKEVP) are compositionally biased toward basic and acidic residues. Residues 296 to 384 (VKKEKHSTQA…LPEVIQKCNA (89 aa)) form an interaction with KDM1A region. Lys297 participates in a covalent cross-link: Glycyl lysine isopeptide (Lys-Gly) (interchain with G-Cter in SUMO2). The stretch at 334–369 (ATTVLRQLDMELVSVKRQIQNIKQTNSALKEKLDGG) forms a coiled coil. Positions 381 to 432 (KCNARWTTEEQLLAVQAIRKYGRDFQAISDVIGNKSVVQVKNFFVNYRRRFN) constitute an SANT 2 domain. Residues 442-485 (AEHGKEETNGPSNQKPVKSPDNSIKMPEEEDEAPVLDVRYASAS) form a disordered region. A compositionally biased stretch (polar residues) spans 450 to 463 (NGPSNQKPVKSPDN). Position 460 is a phosphoserine (Ser460). A Glycyl lysine isopeptide (Lys-Gly) (interchain with G-Cter in SUMO2) cross-link involves residue Lys466.

This sequence belongs to the CoREST family. Interacts directly with GFI1 and GFI1B in a RCOR/GFI/KDM1A/HDAC complex. Interacts with INMS1. Component of a BHC histone deacetylase complex that contains HDAC1, HDAC2, HMG20B/BRAF35, KDM1A, RCOR1/CoREST and PHF21A/BHC80. The BHC complex may also contain ZMYM2, ZNF217, ZMYM3, GSE1 and GTF2I. Interacts with REST. Interacts with the SMARCE1/BAF57, suggesting that the BHC complex may recruit the ATP-dependent chromatin-remodeling SWI-SNF complex. Interacts with SOX2. As to quaternary structure, (Microbial infection) Interacts with herpes virus HSV-1 ICP0 protein; the interaction leads to the disruption of the BHC complex, thereby preventing the BHC complex from repressing transcription of viral genes. In terms of processing, phosphorylated by HSV-1 protein kinases in case of infection. Ubiquitously expressed.

The protein localises to the nucleus. Essential component of the BHC complex, a corepressor complex that represses transcription of neuron-specific genes in non-neuronal cells. The BHC complex is recruited at RE1/NRSE sites by REST and acts by deacetylating and demethylating specific sites on histones, thereby acting as a chromatin modifier. In the BHC complex, it serves as a molecular beacon for the recruitment of molecular machinery, including MeCP2 and SUV39H1, that imposes silencing across a chromosomal interval. Plays a central role in demethylation of Lys-4 of histone H3 by promoting demethylase activity of KDM1A on core histones and nucleosomal substrates. It also protects KDM1A from the proteasome. Component of a RCOR/GFI/KDM1A/HDAC complex that suppresses, via histone deacetylase (HDAC) recruitment, a number of genes implicated in multilineage blood cell development and controls hematopoietic differentiation. This is REST corepressor 1 (RCOR1) from Homo sapiens (Human).